Consider the following 356-residue polypeptide: S-adenosylmethionine:tRNA ribosyltransferase-isomerase (356 aa).

It belongs to the QueA family. As to quaternary structure, monomer.

It is found in the cytoplasm. It carries out the reaction 7-aminomethyl-7-carbaguanosine(34) in tRNA + S-adenosyl-L-methionine = epoxyqueuosine(34) in tRNA + adenine + L-methionine + 2 H(+). Its pathway is tRNA modification; tRNA-queuosine biosynthesis. In terms of biological role, transfers and isomerizes the ribose moiety from AdoMet to the 7-aminomethyl group of 7-deazaguanine (preQ1-tRNA) to give epoxyqueuosine (oQ-tRNA). In Yersinia pseudotuberculosis serotype O:3 (strain YPIII), this protein is S-adenosylmethionine:tRNA ribosyltransferase-isomerase.